Consider the following 312-residue polypeptide: Tetraspanin-17 (312 aa).

4 helical membrane passes run 17–37 (IFSIYYWLSALGHVFLGLWML), 64–84 (VSLVCGCAQLLVGFLGLCGAV), 89–109 (FLLLAFVMFLIGTFLADVAMG), and 274–294 (IWIFVGFGFGSALTMMLGICL).

This sequence belongs to the tetraspanin (TM4SF) family. Expressed in dopaminergic neurons, head muscles, vulva and spermatheca.

Its subcellular location is the cell membrane. The protein localises to the cell projection. It localises to the dendrite. The protein resides in the axon. Its function is as follows. Protects dopaminergic neurons against oxidative stress-induced neurodegeneration. May act partly via dopamine receptor dop-2 to negatively regulate dopamine reuptake transporter dat-1 activity. Also plays a role in modulating behaviors linked to dopamine signaling. Confers protection against oxidative stress in the whole body. The protein is Tetraspanin-17 of Caenorhabditis elegans.